The following is a 416-amino-acid chain: Orexin/Hypocretin receptor type 1 (416 aa).

The tract at residues 1–22 (MEPSATPGAQPGVPTSSGEPFH) is disordered. At 1 to 46 (MEPSATPGAQPGVPTSSGEPFHLPPDYEDEFLRYLWRDYLYPKQYE) the chain is on the extracellular side. A required for response to orexin-A region spans residues 26–41 (DYEDEFLRYLWRDYLY). The chain crosses the membrane as a helical span at residues 47–67 (WVLIAAYVAVFLIALVGNTLV). The Cytoplasmic segment spans residues 68-82 (CLAVWRNHHMRTVTN). A helical transmembrane segment spans residues 83 to 105 (YFIVNLSLADVLVTAICLPASLL). The Extracellular portion of the chain corresponds to 106–119 (VDITESWLFGHALC). Cysteines 119 and 202 form a disulfide. The helical transmembrane segment at 120 to 140 (KVIPYLQAVSVSVAVLTLSFI) threads the bilayer. Over 141 to 160 (ALDRWYAICHPLLFKSTARR) the chain is Cytoplasmic. The chain crosses the membrane as a helical span at residues 161–182 (ARGSILGIWAVSLAVMVPQAAV). The Extracellular portion of the chain corresponds to 183 to 213 (MECSSVLPELANRTRLFSVCDERWADELYPK). N-linked (GlcNAc...) asparagine glycosylation is present at Asn194. Residues 214–235 (IYHSCFFFVTYLAPLGLMGMAY) form a helical membrane-spanning segment. At 236–298 (FQIFRKLWGP…QMRARRKTAK (63 aa)) the chain is on the cytoplasmic side. The chain crosses the membrane as a helical span at residues 299–321 (MLMVVLLVFALCYLPISVLNVLK). The Extracellular portion of the chain corresponds to 322–336 (RVFGMFRQASDREAV). The helical transmembrane segment at 337 to 360 (YACFTFSHWLVYANSAANPIIYNF) threads the bilayer. Residues 361 to 416 (LSGKFREQFKAAFSCCLPGLGPSSSARHKSLSLQSRCSVSKVSEHVVLTTVTTVLS) lie on the Cytoplasmic side of the membrane.

The protein belongs to the G-protein coupled receptor 1 family. Highly expressed in the brain in the prefrontal cortex, hippocampus, paraventricular thalamus, ventromedial hypothalamus, arcuate nucleus, dorsal raphe nucleus, and locus coeruleus. Not detected in the spleen, lung, liver, skeletal muscle, kidney and testis. Orexin receptor mRNA expression has also been reported in the adrenal gland, enteric nervous system, and pancreas.

The protein resides in the cell membrane. Functionally, moderately selective excitatory receptor for orexin-A and, with a lower affinity, for orexin-B neuropeptide. Triggers an increase in cytoplasmic Ca(2+) levels in response to orexin-A binding. The polypeptide is Orexin/Hypocretin receptor type 1 (Rattus norvegicus (Rat)).